The chain runs to 239 residues: tRNA (guanine-N(1)-)-methyltransferase (239 aa).

Residues Gly112 and 132 to 137 (IGDYVL) contribute to the S-adenosyl-L-methionine site.

It belongs to the RNA methyltransferase TrmD family. In terms of assembly, homodimer.

It localises to the cytoplasm. The enzyme catalyses guanosine(37) in tRNA + S-adenosyl-L-methionine = N(1)-methylguanosine(37) in tRNA + S-adenosyl-L-homocysteine + H(+). In terms of biological role, specifically methylates guanosine-37 in various tRNAs. In Rhodospirillum rubrum (strain ATCC 11170 / ATH 1.1.1 / DSM 467 / LMG 4362 / NCIMB 8255 / S1), this protein is tRNA (guanine-N(1)-)-methyltransferase.